A 57-amino-acid polypeptide reads, in one-letter code: Large ribosomal subunit protein bL32c (57 aa).

In terms of assembly, component of the chloroplast large ribosomal subunit (LSU). Mature 70S chloroplast ribosomes of higher plants consist of a small (30S) and a large (50S) subunit. The 30S small subunit contains 1 molecule of ribosomal RNA (16S rRNA) and 24 different proteins. The 50S large subunit contains 3 rRNA molecules (23S, 5S and 4.5S rRNA) and 33 different proteins.

Its subcellular location is the plastid. It localises to the chloroplast. Its function is as follows. Component of the chloroplast ribosome (chloro-ribosome), a dedicated translation machinery responsible for the synthesis of chloroplast genome-encoded proteins, including proteins of the transcription and translation machinery and components of the photosynthetic apparatus. The polypeptide is Large ribosomal subunit protein bL32c (rpl32) (Spinacia oleracea (Spinach)).